Reading from the N-terminus, the 417-residue chain is NADH-quinone oxidoreductase subunit D (417 aa).

Belongs to the complex I 49 kDa subunit family. As to quaternary structure, NDH-1 is composed of 14 different subunits. Subunits NuoB, C, D, E, F, and G constitute the peripheral sector of the complex.

The protein localises to the cell inner membrane. It catalyses the reaction a quinone + NADH + 5 H(+)(in) = a quinol + NAD(+) + 4 H(+)(out). NDH-1 shuttles electrons from NADH, via FMN and iron-sulfur (Fe-S) centers, to quinones in the respiratory chain. The immediate electron acceptor for the enzyme in this species is believed to be ubiquinone. Couples the redox reaction to proton translocation (for every two electrons transferred, four hydrogen ions are translocated across the cytoplasmic membrane), and thus conserves the redox energy in a proton gradient. The polypeptide is NADH-quinone oxidoreductase subunit D (Burkholderia vietnamiensis (strain G4 / LMG 22486) (Burkholderia cepacia (strain R1808))).